We begin with the raw amino-acid sequence, 224 residues long: Ribonuclease HII (224 aa).

Residues 36–224 (RGVAGVDEVG…RRSFLRRFLG (189 aa)) form the RNase H type-2 domain. A divalent metal cation contacts are provided by Asp42, Glu43, and Asp138.

The protein belongs to the RNase HII family. It depends on Mn(2+) as a cofactor. The cofactor is Mg(2+).

It is found in the cytoplasm. It carries out the reaction Endonucleolytic cleavage to 5'-phosphomonoester.. In terms of biological role, endonuclease that specifically degrades the RNA of RNA-DNA hybrids. This is Ribonuclease HII from Parasynechococcus marenigrum (strain WH8102).